Here is a 193-residue protein sequence, read N- to C-terminus: Adenylate kinase (193 aa).

An ATP-binding site is contributed by 10–18 (GVPGVGGTT).

Belongs to the archaeal adenylate kinase family. Monomer.

Its subcellular location is the cytoplasm. It catalyses the reaction AMP + ATP = 2 ADP. This Methanococcus aeolicus (strain ATCC BAA-1280 / DSM 17508 / OCM 812 / Nankai-3) protein is Adenylate kinase.